A 162-amino-acid chain; its full sequence is uncharacterized protein (162 aa).

A signal peptide spans 1-18; that stretch reads MRKTFLTLLCVSSAIAHA.

Belongs to the fimbrial protein family.

In terms of biological role, part of the yfcOPQRSUV fimbrial operon. Could contribute to adhesion to various surfaces in specific environmental niches. Increases adhesion to eukaryotic T24 bladder epithelial cells in the absence of fim genes. This is an uncharacterized protein from Escherichia coli (strain K12).